Consider the following 429-residue polypeptide: Lysophosphatidic acid phosphatase type 6 (429 aa).

Residues 1 to 32 (MISRVFKLRMWAPVGVLTSLTYCLHQRRVALA) constitute a mitochondrion transit peptide. The tract at residues 58–169 (RHGARSPLKP…VFIRSTNIYR (112 aa)) is substrate binding. His59 functions as the Nucleophile in the catalytic mechanism. Asp336 (proton donor) is an active-site residue.

The protein belongs to the histidine acid phosphatase family. Monomer. Detected in brain (at protein level).

The protein resides in the mitochondrion. It catalyses the reaction a phosphate monoester + H2O = an alcohol + phosphate. The enzyme catalyses 1-(9Z-octadecenoyl)-sn-glycero-3-phosphate + H2O = 1-(9Z-octadecenoyl)-sn-glycerol + phosphate. Its function is as follows. Hydrolyzes lysophosphatidic acid (LPA) containing a medium length fatty acid chain to the corresponding monoacylglycerol. Has highest activity with lysophosphatidic acid containing myristate (C14:0), monounsaturated oleate (C18:1) or palmitate (C16:0), and lower activity with C18:0 and C6:0 lysophosphatidic acid. This Bos taurus (Bovine) protein is Lysophosphatidic acid phosphatase type 6 (ACP6).